The sequence spans 388 residues: MVTVEEVRKAQRAEGPATILAIGTVTPANCVNQSTYPDYYFRITNSEHKTELKEKFQRMCDKSMITKRYMHLTEEILKENPSFCEYMAPSLDARQDIAVVEVPKLGKEAAQSAIKEWGQPKSKITHVVFCTTSGIDMPGADYQLTKLLGLRPSVKRLMMYQQGCFAGGTVLRLAKDLAENNKGARVLIVCSEITVVTFRGPSETHLDSLVGQALFGDGAAAVIVGADPTPAEKPLFQLVSAAQTLAPNSCGAIDGHLREVGLTFHLLKDVPSVVSNNIEKCLFEAFNPLGISDWNSVFWIAHPGGPAILDQVEDKLGLKPEKLRATRHVLSEYGNMSSACVLFILDEMRKASSNAGLGTTGEGLEWGVLFGFGPGLTIETVVLHSVPT.

Cys-164 is a catalytic residue.

Belongs to the thiolase-like superfamily. Chalcone/stilbene synthases family.

The enzyme catalyses (E)-4-coumaroyl-CoA + 3 malonyl-CoA + 3 H(+) = 2',4,4',6'-tetrahydroxychalcone + 3 CO2 + 4 CoA. It participates in secondary metabolite biosynthesis; flavonoid biosynthesis. Its function is as follows. The primary product of this enzyme is 4,2',4',6'-tetrahydroxychalcone (also termed naringenin-chalcone or chalcone) which can under specific conditions spontaneously isomerize into naringenin. The protein is Chalcone synthase DIV (CHS-DIV) of Ipomoea batatas (Sweet potato).